We begin with the raw amino-acid sequence, 395 residues long: Na(+)/H(+) antiporter NhaA (395 aa).

The next 11 membrane-spanning stretches (helical) occupy residues 11-31, 61-81, 96-116, 127-147, 156-176, 179-199, 215-237, 262-282, 295-315, 334-354, and 366-386; these read FQLEAASGLLLIAAAILALII, LLLWINDGLMALFFLLIGLEV, IVLPGAAAIGGMLVPALIYWF, GWAIPTATDIAFALGVLALLG, LFLMTLAIIDDLGAIVIIAIF, GELSTLSLGLAAACIAALVAM, LILWVCVLKSGVHATLAGVTLAF, VAYGILPLFAFANAGLSLSGV, IAVGLLLGKTLGVFGLTWLAV, VAILCGIGFTMSLFVGSLAFV, and MGILTGSVFAALIGYAVTAAA.

This sequence belongs to the NhaA Na(+)/H(+) (TC 2.A.33) antiporter family.

Its subcellular location is the cell inner membrane. The catalysed reaction is Na(+)(in) + 2 H(+)(out) = Na(+)(out) + 2 H(+)(in). Functionally, na(+)/H(+) antiporter that extrudes sodium in exchange for external protons. This chain is Na(+)/H(+) antiporter NhaA, found in Pseudomonas fluorescens (strain Pf0-1).